Reading from the N-terminus, the 1188-residue chain is Meiotically up-regulated gene 190 protein (1188 aa).

A compositionally biased stretch (polar residues) spans 1 to 11; that stretch reads MSTHSGDSTKQ. 2 disordered regions span residues 1-61 and 83-125; these read MSTH…DPIT and FTVP…EADN. Over residues 41-61 the composition is skewed to basic and acidic residues; the sequence is EKKEEQQREQTENEKLFDPIT. Positions 84 to 112 are enriched in polar residues; the sequence is TVPNQSIQGSSLPSEKPYLSSNQPTNVYK. A helical transmembrane segment spans residues 173–193; the sequence is LVISWFFTHSIIISAVLPLAI. The SMP-LTD domain occupies 228–453; sequence IPESAEWMNH…SPKSMTIDLS (226 aa). Residues 298-318 form a disordered region; sequence ASESFSEKQASEAEHKDEPEQ. Positions 302–318 are enriched in basic and acidic residues; it reads FSEKQASEAEHKDEPEQ. C2 domains lie at 451–576 and 636–781; these read DLSK…ERCD and KEEE…TKWY. 6 residues coordinate Ca(2+): Asp485, Asp491, Asp544, Asp546, Ser549, and Asp552. Disordered regions lie at residues 615 to 639 and 1002 to 1066; these read TIPR…KEEE and QRAS…GTMN. Ser1005 carries the post-translational modification Phosphoserine. A compositionally biased stretch (acidic residues) spans 1022–1032; the sequence is DDSVDTEDEET.

Ca(2+) is required as a cofactor.

Its subcellular location is the cytoplasm. The protein resides in the endoplasmic reticulum membrane. The protein localises to the nucleus membrane. It localises to the cytoskeleton. It is found in the microtubule organizing center. Its subcellular location is the spindle pole body. Functionally, has a role in meiosis. This Schizosaccharomyces pombe (strain 972 / ATCC 24843) (Fission yeast) protein is Meiotically up-regulated gene 190 protein (mug190).